Here is an 888-residue protein sequence, read N- to C-terminus: Serine/arginine repetitive matrix protein 1 (888 aa).

The PWI domain occupies 27–126 (QLKFAECLEK…AGIPTAFLEL (100 aa)). Positions 139 to 169 (EKLASMKKQDEDKEKRDKEDKDNREKRDRSR) are enriched in basic and acidic residues. Positions 139–888 (EKLASMKKQD…MRKAQVSPPS (750 aa)) are disordered. Residues 170–206 (SPRRRKSRSPSPRRRSSPIRRERKRSHSRSPHHRTKS) are compositionally biased toward basic residues. 2 stretches are compositionally biased toward basic and acidic residues: residues 213–232 (PEKK…KETV) and 254–276 (ETKE…EKTR). Basic residues-rich tracts occupy residues 277 to 325 (QRSP…RTPP) and 332 to 347 (PRHR…RRRS). Low complexity-rich tracts occupy residues 348–364 (SASL…SRSR) and 473–496 (SVQQ…SSSS). 2 stretches are compositionally biased toward basic residues: residues 528–554 (PRKR…RRRS) and 561–585 (PRRR…RSPS). Positions 586–598 (PRRYSPPIQRRYS) are enriched in low complexity. Composition is skewed to basic residues over residues 614 to 629 (PKRR…RRVS) and 642 to 656 (AKRR…HRKG). Basic and acidic residues predominate over residues 662–677 (SNRETRSPPQNKRDSP). 3 stretches are compositionally biased toward low complexity: residues 697–712 (ASAS…PSTR), 728–749 (ASTP…SGSP), and 763–775 (ARSR…WSPA). Polar residues predominate over residues 780 to 790 (SPTQSPSPARN). The span at 798–823 (KKKKKKKDKKHKKDKKHKKHKKHKKE) shows a compositional bias: basic residues. The segment covering 826–843 (AVAAAPAAVAAADTTSAQ) has biased composition (low complexity). Over residues 866-876 (DLEKHLREKAL) the composition is skewed to basic and acidic residues.

Belongs to the splicing factor SR family.

Its subcellular location is the nucleus. Involved in pre-mRNA splicing and processing events. This is Serine/arginine repetitive matrix protein 1 (SRRM1) from Gallus gallus (Chicken).